A 219-amino-acid chain; its full sequence is Orotate phosphoribosyltransferase (219 aa).

Lys26 is a binding site for 5-phospho-alpha-D-ribose 1-diphosphate. Residue 34 to 35 (FF) participates in orotate binding. 5-phospho-alpha-D-ribose 1-diphosphate-binding positions include 72–73 (YK), Arg98, Lys99, Lys102, His104, and 124–132 (DDVITAGTA). Orotate contacts are provided by Thr128 and Arg156.

It belongs to the purine/pyrimidine phosphoribosyltransferase family. PyrE subfamily. Homodimer. Requires Mg(2+) as cofactor.

The catalysed reaction is orotidine 5'-phosphate + diphosphate = orotate + 5-phospho-alpha-D-ribose 1-diphosphate. Its pathway is pyrimidine metabolism; UMP biosynthesis via de novo pathway; UMP from orotate: step 1/2. In terms of biological role, catalyzes the transfer of a ribosyl phosphate group from 5-phosphoribose 1-diphosphate to orotate, leading to the formation of orotidine monophosphate (OMP). The sequence is that of Orotate phosphoribosyltransferase from Xanthomonas campestris pv. campestris (strain 8004).